A 195-amino-acid polypeptide reads, in one-letter code: Imidazoleglycerol-phosphate dehydratase (195 aa).

Belongs to the imidazoleglycerol-phosphate dehydratase family.

The protein resides in the cytoplasm. It catalyses the reaction D-erythro-1-(imidazol-4-yl)glycerol 3-phosphate = 3-(imidazol-4-yl)-2-oxopropyl phosphate + H2O. It participates in amino-acid biosynthesis; L-histidine biosynthesis; L-histidine from 5-phospho-alpha-D-ribose 1-diphosphate: step 6/9. In Desulfosudis oleivorans (strain DSM 6200 / JCM 39069 / Hxd3) (Desulfococcus oleovorans), this protein is Imidazoleglycerol-phosphate dehydratase.